The sequence spans 20 residues: IVPFLLGMVPKLVCLITKKC.

Residue Met-8 is modified to Methionine sulfoxide; partial. Cys-14 and Cys-20 are disulfide-bonded.

This sequence belongs to the frog skin active peptide (FSAP) family. Brevinin subfamily. As to expression, expressed by the skin glands.

It is found in the secreted. In terms of biological role, antimicrobial peptide active against Gram-positive bacterium S.epidermidis ATCC 12228 (MIC=4 uM), against Gram-negative bacterium E.coli ATCC 25922 (MIC=64 uM) and against yeast C.parapsilosis ATCC 22019 (MIC=16 uM). Has hemolytic and cytotoxic activity. In Rana italica (Italian stream frog), this protein is Brevinin-1ITa.